We begin with the raw amino-acid sequence, 307 residues long: Methionyl-tRNA formyltransferase (307 aa).

S110–P113 lines the (6S)-5,6,7,8-tetrahydrofolate pocket.

Belongs to the Fmt family.

The catalysed reaction is L-methionyl-tRNA(fMet) + (6R)-10-formyltetrahydrofolate = N-formyl-L-methionyl-tRNA(fMet) + (6S)-5,6,7,8-tetrahydrofolate + H(+). Functionally, attaches a formyl group to the free amino group of methionyl-tRNA(fMet). The formyl group appears to play a dual role in the initiator identity of N-formylmethionyl-tRNA by promoting its recognition by IF2 and preventing the misappropriation of this tRNA by the elongation apparatus. This is Methionyl-tRNA formyltransferase from Rhodococcus erythropolis (strain PR4 / NBRC 100887).